The following is a 167-amino-acid chain: S-ribosylhomocysteine lyase (167 aa).

Fe cation-binding residues include histidine 54, histidine 58, and cysteine 128.

This sequence belongs to the LuxS family. In terms of assembly, homodimer. It depends on Fe cation as a cofactor.

The enzyme catalyses S-(5-deoxy-D-ribos-5-yl)-L-homocysteine = (S)-4,5-dihydroxypentane-2,3-dione + L-homocysteine. In terms of biological role, involved in the synthesis of autoinducer 2 (AI-2) which is secreted by bacteria and is used to communicate both the cell density and the metabolic potential of the environment. The regulation of gene expression in response to changes in cell density is called quorum sensing. Catalyzes the transformation of S-ribosylhomocysteine (RHC) to homocysteine (HC) and 4,5-dihydroxy-2,3-pentadione (DPD). The protein is S-ribosylhomocysteine lyase of Haemophilus influenzae (strain PittGG).